A 383-amino-acid polypeptide reads, in one-letter code: Probable transcriptional repressor C1348.12 (383 aa).

The zn(2)-C6 fungal-type DNA-binding region spans 34–60; it reads CVICRSKKQKCDGQLPCLYCKKYEYQC.

The protein localises to the nucleus. Probable transcriptional repressor of multidrug resistance genes. The chain is Probable transcriptional repressor C1348.12 from Schizosaccharomyces pombe (strain 972 / ATCC 24843) (Fission yeast).